A 158-amino-acid polypeptide reads, in one-letter code: N-alpha-acetyltransferase RimI (158 aa).

Positions 8 to 155 (VTIGALTRAD…DAYTMRRDSG (148 aa)) constitute an N-acetyltransferase domain.

It belongs to the acetyltransferase family. RimI subfamily. Monomer. Interacts with TsaD. Interacts with GroS/GroES.

The catalysed reaction is N-terminal L-methionyl-L-alanyl-[protein] + acetyl-CoA = N-terminal N(alpha)-acetyl-L-methionyl-L-alanyl-[protein] + CoA + H(+). It catalyses the reaction N-terminal L-methionyl-L-seryl-[protein] + acetyl-CoA = N-terminal N(alpha)-acetyl-L-methionyl-L-seryl-[protein] + CoA + H(+). The enzyme catalyses N-terminal L-methionyl-L-valyl-[protein] + acetyl-CoA = N-terminal N(alpha)-acetyl-L-methionyl-L-valyl-[protein] + CoA + H(+). It carries out the reaction N-terminal L-methionyl-L-threonyl-[protein] + acetyl-CoA = N-terminal N(alpha)-acetyl-L-methionyl-L-threonyl-[protein] + CoA + H(+). The catalysed reaction is N-terminal L-methionyl-L-lysyl-[protein] + acetyl-CoA = N-terminal N(alpha)-acetyl-L-methionyl-L-lysyl-[protein] + CoA + H(+). It catalyses the reaction N-terminal L-methionyl-L-leucyl-[protein] + acetyl-CoA = N-terminal N(alpha)-acetyl-L-methionyl-L-leucyl-[protein] + CoA + H(+). The enzyme catalyses N-terminal L-methionyl-L-phenylalanyl-[protein] + acetyl-CoA = N-terminal N(alpha)-acetyl-L-methionyl-L-phenylalanyl-[protein] + CoA + H(+). It carries out the reaction N-terminal L-methionyl-L-tyrosyl-[protein] + acetyl-CoA = N-terminal N(alpha)-acetyl-L-methionyl-L-tyrosyl-[protein] + CoA + H(+). The catalysed reaction is N-terminal glycyl-[protein] + acetyl-CoA = N-terminal N(alpha)-acetylglycyl-[protein] + CoA + H(+). It catalyses the reaction N-terminal L-alanyl-[protein] + acetyl-CoA = N-terminal N(alpha)-acetyl-L-alanyl-[protein] + CoA + H(+). The enzyme catalyses N-terminal L-seryl-[protein] + acetyl-CoA = N-terminal N(alpha)-acetyl-L-seryl-[protein] + CoA + H(+). It carries out the reaction N-terminal L-valyl-[protein] + acetyl-CoA = N-terminal N(alpha)-acetyl-L-valyl-[protein] + CoA + H(+). The catalysed reaction is N-terminal L-cysteinyl-[protein] + acetyl-CoA = N-terminal N(alpha)-acetyl-L-cysteinyl-[protein] + CoA + H(+). It catalyses the reaction N-terminal L-threonyl-[protein] + acetyl-CoA = N-terminal N(alpha)-acetyl-L-threonyl-[protein] + CoA + H(+). Its function is as follows. N-alpha-acetyltransferase that specifically mediates the acetylation of N-terminal residues. Able to mediate acetylation of a wide variety of N-terminal residues, with preference for hydrophobic N-termini. Acetylates GroS/GroES and GroEL1. Able to acetylate the ribosomal protein bS18, but it is unclear whether it acetylates its N-terminal alanine residue. The sequence is that of N-alpha-acetyltransferase RimI from Mycobacterium tuberculosis (strain ATCC 25618 / H37Rv).